Reading from the N-terminus, the 739-residue chain is Exocyst complex component 3-like protein (739 aa).

Disordered stretches follow at residues 1-21 (MDSK…PEWP) and 698-718 (AALS…RRAL). The segment at 1–370 (MDSKIQPTLR…DVSQLEPLLT (370 aa)) is mediates interaction with EXOC2, EXOC4 and EXOC5.

The protein belongs to the SEC6 family. As to quaternary structure, interacts with EXOC2, EXOC4 and EXOC5; may be part of the exocyst. In terms of tissue distribution, ubiquitously expressed.

Its subcellular location is the cytoplasmic vesicle. The protein resides in the secretory vesicle. As part of the exocyst, may play a role in regulated exocytosis of insulin granules. In Mus musculus (Mouse), this protein is Exocyst complex component 3-like protein (Exoc3l1).